We begin with the raw amino-acid sequence, 201 residues long: MNSIKHSTEIPSTSTQSLVFEFTNLDDLYGFLNILQCREEYSFAQIRAFYNIPVDKKLLVNIQVKNPAQNLDYAWERRLKHHFRYMLDLEKLMWNLSTLGGAYSAMGDFDANYAKVAAKITAHQINLAKKYGDPVILARCYLYTALAEAQLGNLSHAVNIVRAIYHWAKQNPNTDIVQRCCEGVYQKLRAIHIFGKASSNK.

This is an uncharacterized protein from Caenorhabditis elegans.